The sequence spans 412 residues: Gamma-glutamyl phosphate reductase (412 aa).

This sequence belongs to the gamma-glutamyl phosphate reductase family.

The protein resides in the cytoplasm. The enzyme catalyses L-glutamate 5-semialdehyde + phosphate + NADP(+) = L-glutamyl 5-phosphate + NADPH + H(+). It participates in amino-acid biosynthesis; L-proline biosynthesis; L-glutamate 5-semialdehyde from L-glutamate: step 2/2. Its function is as follows. Catalyzes the NADPH-dependent reduction of L-glutamate 5-phosphate into L-glutamate 5-semialdehyde and phosphate. The product spontaneously undergoes cyclization to form 1-pyrroline-5-carboxylate. This chain is Gamma-glutamyl phosphate reductase, found in Bartonella henselae (strain ATCC 49882 / DSM 28221 / CCUG 30454 / Houston 1) (Rochalimaea henselae).